Reading from the N-terminus, the 486-residue chain is MAINPLKILFVASEVEGLVKTGGLADVARALPLYLAQKGHDVRIMLPFYKTIKRRDEAKLLVSRWLPTHPGLPDIGYRIYQMDLEGVCVYLLDCPQYFDRPQLYAENNQAYPDNGERFAFLAAAALHASEQLAFAPDIVHCNDWHTGLLPLLLKTRHAHNPFFQHTRSVISIHNAAFQGVFERQQFWAVPEIADYEQRISYDYGHVNLLKCGVLYADKINAVSPNYASELLTHLGAHGMASIFQQRAADLRGILNGCDYQDWDPAFDDFLPATYDVDNLAGKHICKQSLQQETGLPVVDLPIYGMVCRLTEQKGVHLLLPVLDKFLHHKVQVVIVGSGDPSLAAQLQTLAQQFPDRLAFINTYDDRLAHLVEAGADFFLMPSLFEPCGLNQMYSLAYGTLPLVRAVGGLKDTVVDWDADPEQATGFCFNDPTANILLDAMRRSLLYYLQDPEQFARVQRNAMNTRFNWPDSVTQYEQMYQDALARH.

Position 20 (Lys-20) interacts with ADP-alpha-D-glucose.

Belongs to the glycosyltransferase 1 family. Bacterial/plant glycogen synthase subfamily.

The enzyme catalyses [(1-&gt;4)-alpha-D-glucosyl](n) + ADP-alpha-D-glucose = [(1-&gt;4)-alpha-D-glucosyl](n+1) + ADP + H(+). It functions in the pathway glycan biosynthesis; glycogen biosynthesis. In terms of biological role, synthesizes alpha-1,4-glucan chains using ADP-glucose. In Aeromonas hydrophila subsp. hydrophila (strain ATCC 7966 / DSM 30187 / BCRC 13018 / CCUG 14551 / JCM 1027 / KCTC 2358 / NCIMB 9240 / NCTC 8049), this protein is Glycogen synthase.